A 1342-amino-acid polypeptide reads, in one-letter code: MVYSYTEKKRIRKDFGKRPQVLDIPYLLSIQLDSFQKFIEQDPEGQYGLEAAFRSVFPIQSYSGNSELQYVSYRLGEPVFDVKECQIRGVTFSAPLRVKLRLVIYEREAPEGTVKDIKEQEVYMGEIPLMTDNGTFVINGTERVIVSQLHRSPGVFFDSDKGKTHSSGKVLYNARIIPYRGSWLDFEFDPKDNLFVRIDRRRKLPATIILRALSYTTEQILDLFFEKVIYQIRDNKLQMELVPERLRGETASFDIESNGTVYVEKGRRITARHIRQLEKDAVAHIEVPVEYIAGKVVAKDYIDESTGELLIAANMELSLDLLAKLSQSGHKRIETLFTNDLDHGPYISETVRVDPTSDRLSALVEIYRMMRPGEPPTREAAENLFENLFFSEDRYDLSAVGRMKFNRSLLRDEIEGSGILSKDDIIQVMKKLIGIRNGIGEVDDIDHLGNRRIRSVGEMAENQFRVGLVRVERAVKERLSLGDLDTLMPQDMINAKPISAAVKEFFGSSQLSQFMDQNNPLSEITHKRRISALGPGGLTRERAGFEVRDVHPTHYGRVCPIETPEGPNIGLINSLSVYAQTNEYGFLETPYRRVRDGVVTDEIHYLSAIEEGNYVIAQANTNLDDEGHFVDDLVTCRSKGESSLFSRDQVDYMDVSTQQVVSVGASLIPFLEHDDANRALMGANMQRQAVPTLRADKPLVGTGMERAVAVDSGVTAVAKRGGTVQYVDASRIVIKVNEDEMYPGEAGIDIYNLTKYTRSNQNTCINQMPCVNLGEPIERGDVLADGPSTDLGELALGQNMRVAFMPWNGYNFEDSILVSERVVQEDRFTTIHIQELACVSRDTKLGPEEITADIPNVGEAALSKLDESGIVYIGAEVTGGDILVGKVTPKGETQLTPEEKLLRAIFGEKASDVKDSSLRVPNGVSGTVIDVQVFTRDGVEKDKRALEIEEMQLKQAKKDLSEELQILEAGLFSRINYLLVAGGIEAEKLDKLPRERWLELGLSDEDKQNQLEQLAEQYDELKHEFEKKLDAKRRKITQGDDLAPGVLKIVKVYLAVKRQIQPGDKMAGRHGNKGVISKINPIEDMPYDENGTPVDIVLNPLGVPSRMNIGQILETHLGMAAKGIGEKINAMLKKQEEVSKLREFIQRAYDLGTDVRQKVDLNTFTDDEVLRLAENLKKGMPIATPVFDGAKESEIKELLQLGGLPSSGQITLFDGRTGEQFERQVTVGYMYMLKLNHLVDDKMHARSTGSYSLVTQQPLGGKAQFGGQRFGEMEVWALEAYGAAYTLQEMLTVKSDDVNGRTKMYKNIVDGNHQMEPGMPESFNVLLKEIRSLGINIELEDE.

Belongs to the RNA polymerase beta chain family. In terms of assembly, the RNAP catalytic core consists of 2 alpha, 1 beta, 1 beta' and 1 omega subunit. When a sigma factor is associated with the core the holoenzyme is formed, which can initiate transcription.

The catalysed reaction is RNA(n) + a ribonucleoside 5'-triphosphate = RNA(n+1) + diphosphate. Its function is as follows. DNA-dependent RNA polymerase catalyzes the transcription of DNA into RNA using the four ribonucleoside triphosphates as substrates. In Erwinia tasmaniensis (strain DSM 17950 / CFBP 7177 / CIP 109463 / NCPPB 4357 / Et1/99), this protein is DNA-directed RNA polymerase subunit beta.